A 488-amino-acid chain; its full sequence is N-succinylglutamate 5-semialdehyde dehydrogenase 2 (488 aa).

221–226 is an NAD(+) binding site; it reads GSSNTG. Residues E244 and C278 contribute to the active site.

The protein belongs to the aldehyde dehydrogenase family. AstD subfamily.

It catalyses the reaction N-succinyl-L-glutamate 5-semialdehyde + NAD(+) + H2O = N-succinyl-L-glutamate + NADH + 2 H(+). It participates in amino-acid degradation; L-arginine degradation via AST pathway; L-glutamate and succinate from L-arginine: step 4/5. Catalyzes the NAD-dependent reduction of succinylglutamate semialdehyde into succinylglutamate. In Pseudoalteromonas translucida (strain TAC 125), this protein is N-succinylglutamate 5-semialdehyde dehydrogenase 2.